We begin with the raw amino-acid sequence, 150 residues long: Large-conductance mechanosensitive channel (150 aa).

The next 2 helical transmembrane spans lie at Val-19 to Leu-39 and Gly-85 to Ile-105.

This sequence belongs to the MscL family. Homopentamer.

The protein localises to the cell inner membrane. Functionally, channel that opens in response to stretch forces in the membrane lipid bilayer. May participate in the regulation of osmotic pressure changes within the cell. This Chlorobium limicola (strain DSM 245 / NBRC 103803 / 6330) protein is Large-conductance mechanosensitive channel.